Reading from the N-terminus, the 162-residue chain is uncharacterized protein (162 aa).

Residues 6–24 form a helical membrane-spanning segment; sequence SYLISIFYIILITSETTAF.

It localises to the membrane. This is an uncharacterized protein from Caenorhabditis elegans.